We begin with the raw amino-acid sequence, 78 residues long: Omega-conotoxin PnVIA (78 aa).

The signal sequence occupies residues 1-22; that stretch reads MKLTCMMIIAVLFLTAWTFVMA. The propeptide occupies 23–45; it reads DDPRDEPEARDEMNPAASKLNER. Cystine bridges form between cysteine 47–cysteine 65, cysteine 54–cysteine 69, and cysteine 64–cysteine 73. Glutamine 76 bears the Glutamine amide mark.

In terms of tissue distribution, expressed by the venom duct.

It is found in the secreted. In terms of biological role, omega-conotoxins act at presynaptic membranes, they bind and block voltage-gated calcium channels (Cav). Acts on high voltage-activated (HVA) calcium currents in molluscan neurons. This chain is Omega-conotoxin PnVIA, found in Conus pennaceus (Feathered cone).